Reading from the N-terminus, the 823-residue chain is MWGSPALAWAVWLACVQPTVFPWSLSFRSDTDKPSSAAEVLTEASSCWTDTVECFSDYMTLWIPRSHVEGLRRWLARTLHLPGTWRSPDHLDSSLAKCGYFLHLASDGDFLFRVQYSACFVQKEKANYRLEIRIFQKGVMGLERSDRYIMKCPMLRSRLGQESVHCGPMFIQVSRPLPLWRDNRQTPWLLSLRGELVASLEDASLMGLYVDMNATTVTVQSPRQGLLQRWEVLNTSAELLPLWLVSGHHAYSLEAACPPVSFQPESEVLVHIPKQRLGLVKRGSYIEETLSLRFLRVHQSNIFMVTENKDFVVVSIPAAGVLQVQRCQEVGGTPGTQAFYRVDLSLEFAEMAAPVLWTVESFFQCVGSGTESPASTAALRTTPSPPSPGPETPPAGVPPAASSQVWAAGPAAQEWLSRDLLHRPSDALAKKGLGPFLQTAKPARRGQTSASILPRVVQAQRGPQPPPGEAGIPGHPTPPATLPSEPVEGVQASPWRPRPVLPTHPALTLPVSSDASSPSPPAPRPERPESLLVSGPSVTLTEGLGTVRPEQDPAKSPGSPLLLRGLSSGDVAAPEPIMGEPGQASEEFQPLARPWRATLAAEELVSHRSPGEPQETCSGTEVERPRQTGPGLPREGARGHMDLSSSEPSQDIEGPGLSILPARDATFSTPSVRQPDPSAWLSSGPELTGMPRVRLAAPLAVLPMEPLPPEPVRPAALLTPEASSVGGPDQARYLESAPGWPVGQEEWGVAHTSSPPSTQTLSLWAPTGVLLPSLVELEYPFQAGRGASLQQELTEPTLALSAESHRPPELQDSVEGLSERPSR.

A signal peptide spans 1–22; the sequence is MWGSPALAWAVWLACVQPTVFP. Disordered stretches follow at residues 206–242, 269–422, 434–520, and 632–656; these read MGLYVDMNATTVTVQSPRQGLLQRWEVLNTSAELLPL, LVHI…DLLH, GPFL…SPSP, and LPREGARGHMDLSSSEPSQDIEGPG. A compositionally biased stretch (pro residues) spans 216-230; the sequence is TVTVQSPRQGLLQRW. Residues 389–402 are compositionally biased toward low complexity; the sequence is GPETPPAGVPPAAS.

It localises to the secreted. Plays a role in left-right patterning process. The polypeptide is Ciliated left-right organizer ZP-N domains-containing protein (Homo sapiens (Human)).